Consider the following 685-residue polypeptide: Threonine--tRNA ligase (685 aa).

A TGS domain is found at 1 to 65; sequence MSTPASAAPA…DTDVEVEPVA (65 aa). Residues 262–568 form a catalytic region; it reads DHRKLGSELD…LTEHYAGAFP (307 aa). Zn(2+) is bound by residues C367, H418, and H545.

This sequence belongs to the class-II aminoacyl-tRNA synthetase family. In terms of assembly, homodimer. Requires Zn(2+) as cofactor.

It is found in the cytoplasm. It catalyses the reaction tRNA(Thr) + L-threonine + ATP = L-threonyl-tRNA(Thr) + AMP + diphosphate + H(+). Catalyzes the attachment of threonine to tRNA(Thr) in a two-step reaction: L-threonine is first activated by ATP to form Thr-AMP and then transferred to the acceptor end of tRNA(Thr). Also edits incorrectly charged L-seryl-tRNA(Thr). In Rhodococcus jostii (strain RHA1), this protein is Threonine--tRNA ligase.